We begin with the raw amino-acid sequence, 356 residues long: Histidine biosynthesis bifunctional protein HisB (356 aa).

Residues 1–166 (MSKKVLFIDR…AICNYLTSLN (166 aa)) are histidinol-phosphatase. The Nucleophile role is filled by Asp-9. Mg(2+)-binding residues include Asp-9 and Asp-11. Residue Asp-11 is the Proton donor of the active site. Residues Cys-93, His-95, Cys-101, and Cys-103 each contribute to the Zn(2+) site. Position 130 (Asp-130) interacts with Mg(2+). The segment at 167-356 (RYAHVKRITK…VLPSSKGVLS (190 aa)) is imidazoleglycerol-phosphate dehydratase.

The protein in the N-terminal section; belongs to the histidinol-phosphatase family. This sequence in the C-terminal section; belongs to the imidazoleglycerol-phosphate dehydratase family. The cofactor is Mg(2+). Zn(2+) is required as a cofactor.

Its subcellular location is the cytoplasm. It catalyses the reaction D-erythro-1-(imidazol-4-yl)glycerol 3-phosphate = 3-(imidazol-4-yl)-2-oxopropyl phosphate + H2O. The catalysed reaction is L-histidinol phosphate + H2O = L-histidinol + phosphate. It functions in the pathway amino-acid biosynthesis; L-histidine biosynthesis; L-histidine from 5-phospho-alpha-D-ribose 1-diphosphate: step 6/9. It participates in amino-acid biosynthesis; L-histidine biosynthesis; L-histidine from 5-phospho-alpha-D-ribose 1-diphosphate: step 8/9. The chain is Histidine biosynthesis bifunctional protein HisB from Baumannia cicadellinicola subsp. Homalodisca coagulata.